The chain runs to 221 residues: Sentrin-specific protease 8 (221 aa).

Met-1 bears the N-acetylmethionine mark. The protease stretch occupies residues 11 to 174; the sequence is SLLRQSDVSL…MYVICNTEAL (164 aa). Catalysis depends on residues His-102 and Asp-119. The Nucleophile role is filled by Cys-163.

Belongs to the peptidase C48 family.

Its function is as follows. Protease that catalyzes two essential functions in the NEDD8 pathway: processing of full-length NEDD8 to its mature form and deconjugation of NEDD8 from targeted proteins such as cullins or p53. This chain is Sentrin-specific protease 8 (Senp8), found in Mus musculus (Mouse).